The following is a 280-amino-acid chain: Nocamycin O-methyltransferase (280 aa).

Belongs to the methyltransferase superfamily.

The enzyme catalyses nocamycin E + S-adenosyl-L-methionine = nocamycin I + S-adenosyl-L-homocysteine. The protein operates within antibiotic biosynthesis. In terms of biological role, involved in the biosynthesis of nocamycin I and nocamycin II. Catalyzes the methylation of nocamycin E to yield nocamycin I. The polypeptide is Nocamycin O-methyltransferase (Saccharothrix syringae (Nocardiopsis syringae)).